We begin with the raw amino-acid sequence, 367 residues long: Glutamate 5-kinase (367 aa).

Residue Lys-10 coordinates ATP. Residues Ser-50, Asp-137, and Asn-149 each coordinate substrate. Residues 169–170 and 211–217 contribute to the ATP site; these read TD and TGGMGTK. The region spanning 275–353 is the PUA domain; that stretch reads AGEITVDDGA…QEISEILGYE (79 aa).

It belongs to the glutamate 5-kinase family.

The protein localises to the cytoplasm. It catalyses the reaction L-glutamate + ATP = L-glutamyl 5-phosphate + ADP. The protein operates within amino-acid biosynthesis; L-proline biosynthesis; L-glutamate 5-semialdehyde from L-glutamate: step 1/2. Its activity is regulated as follows. Proline-mediated feedback inhibition. Its function is as follows. Catalyzes the transfer of a phosphate group to glutamate to form L-glutamate 5-phosphate. In Serratia marcescens, this protein is Glutamate 5-kinase.